The following is a 241-amino-acid chain: 1-(5-phosphoribosyl)-5-[(5-phosphoribosylamino)methylideneamino] imidazole-4-carboxamide isomerase (241 aa).

Catalysis depends on D8, which acts as the Proton acceptor. The Proton donor role is filled by D131.

The protein belongs to the HisA/HisF family.

It is found in the cytoplasm. It catalyses the reaction 1-(5-phospho-beta-D-ribosyl)-5-[(5-phospho-beta-D-ribosylamino)methylideneamino]imidazole-4-carboxamide = 5-[(5-phospho-1-deoxy-D-ribulos-1-ylimino)methylamino]-1-(5-phospho-beta-D-ribosyl)imidazole-4-carboxamide. The protein operates within amino-acid biosynthesis; L-histidine biosynthesis; L-histidine from 5-phospho-alpha-D-ribose 1-diphosphate: step 4/9. The sequence is that of 1-(5-phosphoribosyl)-5-[(5-phosphoribosylamino)methylideneamino] imidazole-4-carboxamide isomerase from Sorangium cellulosum (strain So ce56) (Polyangium cellulosum (strain So ce56)).